The chain runs to 206 residues: MAANKSKGQSSLALHKVIMVGSGGVGKSALTLQFMYDEFVEDYEPTKADSYRKKVVLDGEEVQIDILDTAGQEDYAAIRDNYFRSGEGFLLVFSITEHESFTATAEFREQILRVKAEEDKIPLLVVGNKSDLEERRQVPVEEARSKAEEWGVQYVETSAKTRANVDKVFFDLMREIRTKKMSENKDKNGKKSSKNKKSFKERCCLL.

21-29 lines the GTP pocket; sequence GSGGVGKSA. The short motif at 43-51 is the Effector region element; it reads YEPTKADSY. Residues 68–72, 128–131, and 158–160 contribute to the GTP site; these read DTAGQ, NKSD, and SAK. Residues 180 to 189 are compositionally biased toward basic and acidic residues; it reads KMSENKDKNG. Residues 180 to 206 form a disordered region; the sequence is KMSENKDKNGKKSSKNKKSFKERCCLL. Cysteine 203 carries the post-translational modification Cysteine methyl ester. Cysteine 203 carries the S-geranylgeranyl cysteine lipid modification. The propeptide at 204-206 is removed in mature form; sequence CLL.

It belongs to the small GTPase superfamily. Ras family. As to quaternary structure, interacts with EXOC2/Sec5 and EXOC8/Exo84. Interacts (via effector domain) with RALBP1. Prenylation is essential for membrane localization. Post-translationally, the farnesylated form confers resistance to the proapoptotic and anti-anchorage-dependent growth effects of some geranylgeranyltransferase I inhibitors.

The protein localises to the cell membrane. The protein resides in the midbody. The catalysed reaction is GTP + H2O = GDP + phosphate + H(+). Alternates between an inactive form bound to GDP and an active form bound to GTP. Activated by a guanine nucleotide-exchange factor (GEF) and inactivated by a GTPase-activating protein (GAP). In terms of biological role, multifunctional GTPase involved in a variety of cellular processes including gene expression, cell migration, cell proliferation, oncogenic transformation and membrane trafficking. Accomplishes its multiple functions by interacting with distinct downstream effectors. Acts as a GTP sensor for GTP-dependent exocytosis of dense core vesicles. Required both to stabilize the assembly of the exocyst complex and to localize functional exocyst complexes to the leading edge of migrating cells. Required for suppression of apoptosis. In late stages of cytokinesis, upon completion of the bridge formation between dividing cells, mediates exocyst recruitment to the midbody to drive abscission. Involved in ligand-dependent receptor mediated endocytosis of the EGF and insulin receptors. The chain is Ras-related protein Ral-B (RALB) from Pongo abelii (Sumatran orangutan).